A 671-amino-acid chain; its full sequence is DNA ligase (671 aa).

NAD(+)-binding positions include 31-35 (DAEYD), 80-81 (SL), and glutamate 110. Lysine 112 functions as the N6-AMP-lysine intermediate in the catalytic mechanism. Residues arginine 133, glutamate 167, lysine 283, and lysine 307 each contribute to the NAD(+) site. The Zn(2+) site is built by cysteine 401, cysteine 404, cysteine 419, and cysteine 424. The BRCT domain occupies 587–671 (EEELVFAGKT…YLPDEGGLNE (85 aa)).

Belongs to the NAD-dependent DNA ligase family. LigA subfamily. Mg(2+) is required as a cofactor. The cofactor is Mn(2+).

The catalysed reaction is NAD(+) + (deoxyribonucleotide)n-3'-hydroxyl + 5'-phospho-(deoxyribonucleotide)m = (deoxyribonucleotide)n+m + AMP + beta-nicotinamide D-nucleotide.. Functionally, DNA ligase that catalyzes the formation of phosphodiester linkages between 5'-phosphoryl and 3'-hydroxyl groups in double-stranded DNA using NAD as a coenzyme and as the energy source for the reaction. It is essential for DNA replication and repair of damaged DNA. This Listeria innocua serovar 6a (strain ATCC BAA-680 / CLIP 11262) protein is DNA ligase.